The chain runs to 37 residues: MEALVYTFLLVSTLGILFFAIFFREPPKVPTKGGKEN.

A helical membrane pass occupies residues 3–23 (ALVYTFLLVSTLGILFFAIFF).

This sequence belongs to the PsbT family. PSII is composed of 1 copy each of membrane proteins PsbA, PsbB, PsbC, PsbD, PsbE, PsbF, PsbH, PsbI, PsbJ, PsbK, PsbL, PsbM, PsbT, PsbY, PsbZ, Psb30/Ycf12, at least 3 peripheral proteins of the oxygen-evolving complex and a large number of cofactors. It forms dimeric complexes.

Its subcellular location is the plastid. It localises to the chloroplast thylakoid membrane. Its function is as follows. Found at the monomer-monomer interface of the photosystem II (PS II) dimer, plays a role in assembly and dimerization of PSII. PSII is a light-driven water plastoquinone oxidoreductase, using light energy to abstract electrons from H(2)O, generating a proton gradient subsequently used for ATP formation. The sequence is that of Photosystem II reaction center protein T from Ephedra sinica (Chinese ephedra).